The chain runs to 87 residues: Acylphosphatase (87 aa).

The region spanning 2-87 (RLTALVSGTV…ATGLRDFHVY (86 aa)) is the Acylphosphatase-like domain. Residues Arg-17 and Asn-35 contribute to the active site.

The protein belongs to the acylphosphatase family.

It carries out the reaction an acyl phosphate + H2O = a carboxylate + phosphate + H(+). The polypeptide is Acylphosphatase (acyP) (Deinococcus geothermalis (strain DSM 11300 / CIP 105573 / AG-3a)).